The chain runs to 189 residues: Inner membrane-spanning protein YciB (189 aa).

5 helical membrane-spanning segments follow: residues Phe4 to Ile24, Ile53 to Phe73, Trp76 to Tyr96, Met121 to Leu141, and Phe149 to Ile169.

Belongs to the YciB family.

The protein localises to the cell inner membrane. Plays a role in cell envelope biogenesis, maintenance of cell envelope integrity and membrane homeostasis. The protein is Inner membrane-spanning protein YciB of Psychromonas ingrahamii (strain DSM 17664 / CCUG 51855 / 37).